We begin with the raw amino-acid sequence, 581 residues long: Moesin/ezrin/radixin homolog 1 (581 aa).

One can recognise an FERM domain in the interval 8-298; that stretch reads MNVRVTTMDA…GNHELYMRRR (291 aa). The tract at residues 452 to 519 is disordered; that stretch reads QVAKGSRAAA…EERRTLAERN (68 aa). The span at 459-469 shows a compositional bias: low complexity; sequence AAAALQAATTT. Residues 477 to 486 show a composition bias toward acidic residues; sequence EEEENEEELI. The span at 495 to 519 shows a compositional bias: basic and acidic residues; that stretch reads FSKDFDTDEHIKDPVEERRTLAERN. Thr-562 carries the phosphothreonine modification.

As to quaternary structure, interacts with cytoskeletal actin.

The protein localises to the cell junction. It localises to the adherens junction. It is found in the cell projection. The protein resides in the microvillus. Its subcellular location is the rhabdomere. The protein localises to the cell membrane. It localises to the cytoplasm. It is found in the cytoskeleton. Involved in connections of major cytoskeletal structures to the plasma membrane. The protein is Moesin/ezrin/radixin homolog 1 of Anopheles gambiae (African malaria mosquito).